A 394-amino-acid polypeptide reads, in one-letter code: Acetate kinase 1 (394 aa).

A Mg(2+)-binding site is contributed by N8. K15 contacts ATP. Residue R90 coordinates substrate. The active-site Proton donor/acceptor is D147. Residues H207–G211 and D282–R284 each bind ATP. Residue E382 participates in Mg(2+) binding.

Belongs to the acetokinase family. As to quaternary structure, homodimer. The cofactor is Mg(2+). Requires Mn(2+) as cofactor.

Its subcellular location is the cytoplasm. The catalysed reaction is acetate + ATP = acetyl phosphate + ADP. It participates in metabolic intermediate biosynthesis; acetyl-CoA biosynthesis; acetyl-CoA from acetate: step 1/2. In terms of biological role, catalyzes the formation of acetyl phosphate from acetate and ATP. Can also catalyze the reverse reaction. This Latilactobacillus sakei subsp. sakei (strain 23K) (Lactobacillus sakei subsp. sakei) protein is Acetate kinase 1.